Consider the following 725-residue polypeptide: Methionine--tRNA ligase (725 aa).

The short motif at 27–37 is the 'HIGH' region element; it reads PYANGQIHIGH. Zn(2+)-binding residues include cysteine 158, cysteine 161, cysteine 171, and cysteine 174. Positions 348-352 match the 'KMSKS' region motif; that stretch reads KMSKS. Lysine 351 contributes to the ATP binding site. Positions 619–725 constitute a tRNA-binding domain; the sequence is DFAKIDLRIA…SGAKPGMRVK (107 aa).

Belongs to the class-I aminoacyl-tRNA synthetase family. MetG type 1 subfamily. As to quaternary structure, homodimer. It depends on Zn(2+) as a cofactor.

Its subcellular location is the cytoplasm. It carries out the reaction tRNA(Met) + L-methionine + ATP = L-methionyl-tRNA(Met) + AMP + diphosphate. Its function is as follows. Is required not only for elongation of protein synthesis but also for the initiation of all mRNA translation through initiator tRNA(fMet) aminoacylation. This chain is Methionine--tRNA ligase, found in Burkholderia pseudomallei (strain 668).